A 296-amino-acid polypeptide reads, in one-letter code: Phosphatidylserine decarboxylase proenzyme (296 aa).

Active-site charge relay system; for autoendoproteolytic cleavage activity residues include aspartate 92, histidine 149, and serine 251. Catalysis depends on serine 251, which acts as the Schiff-base intermediate with substrate; via pyruvic acid; for decarboxylase activity. Pyruvic acid (Ser); by autocatalysis is present on serine 251.

The protein belongs to the phosphatidylserine decarboxylase family. PSD-B subfamily. Prokaryotic type I sub-subfamily. As to quaternary structure, heterodimer of a large membrane-associated beta subunit and a small pyruvoyl-containing alpha subunit. The cofactor is pyruvate. Post-translationally, is synthesized initially as an inactive proenzyme. Formation of the active enzyme involves a self-maturation process in which the active site pyruvoyl group is generated from an internal serine residue via an autocatalytic post-translational modification. Two non-identical subunits are generated from the proenzyme in this reaction, and the pyruvate is formed at the N-terminus of the alpha chain, which is derived from the carboxyl end of the proenzyme. The autoendoproteolytic cleavage occurs by a canonical serine protease mechanism, in which the side chain hydroxyl group of the serine supplies its oxygen atom to form the C-terminus of the beta chain, while the remainder of the serine residue undergoes an oxidative deamination to produce ammonia and the pyruvoyl prosthetic group on the alpha chain. During this reaction, the Ser that is part of the protease active site of the proenzyme becomes the pyruvoyl prosthetic group, which constitutes an essential element of the active site of the mature decarboxylase.

It localises to the cell membrane. The enzyme catalyses a 1,2-diacyl-sn-glycero-3-phospho-L-serine + H(+) = a 1,2-diacyl-sn-glycero-3-phosphoethanolamine + CO2. Its pathway is phospholipid metabolism; phosphatidylethanolamine biosynthesis; phosphatidylethanolamine from CDP-diacylglycerol: step 2/2. Functionally, catalyzes the formation of phosphatidylethanolamine (PtdEtn) from phosphatidylserine (PtdSer). The chain is Phosphatidylserine decarboxylase proenzyme from Hahella chejuensis (strain KCTC 2396).